A 194-amino-acid chain; its full sequence is Thymidine kinase (194 aa).

ATP contacts are provided by residues 15–22 and 88–91; these read GSMFSGKS and DEVQ. The Proton acceptor role is filled by E89. 4 residues coordinate Zn(2+): C145, C148, C183, and C186.

Belongs to the thymidine kinase family. Homotetramer.

It is found in the cytoplasm. The enzyme catalyses thymidine + ATP = dTMP + ADP + H(+). The protein is Thymidine kinase of Bacillus anthracis (strain A0248).